We begin with the raw amino-acid sequence, 133 residues long: Putative nickel-responsive regulator (133 aa).

Ni(2+)-binding residues include histidine 74, histidine 85, histidine 87, and cysteine 93.

Belongs to the transcriptional regulatory CopG/NikR family. Requires Ni(2+) as cofactor.

Functionally, transcriptional regulator. This Saccharolobus islandicus (strain Y.N.15.51 / Yellowstone #2) (Sulfolobus islandicus) protein is Putative nickel-responsive regulator.